The primary structure comprises 130 residues: MKKKHKRLLITSGIFCFLSCAVFFILTTLKENISFFYTVSEAIVLPNGQKLIRVGGMVVENSVIRNESEVIFQMTDFNKSVMVKYQGILPPMFSEKSGVVVQGKMFDNSTFLADTVFAKHDENYMPKVLK.

The Cytoplasmic portion of the chain corresponds to 1 to 7 (MKKKHKR). A helical; Signal-anchor for type II membrane protein transmembrane segment spans residues 8–28 (LLITSGIFCFLSCAVFFILTT). The Extracellular segment spans residues 29–130 (LKENISFFYT…DENYMPKVLK (102 aa)). Heme-binding residues include H120 and Y124.

This sequence belongs to the CcmE/CycJ family.

The protein resides in the cell membrane. Its function is as follows. Heme chaperone required for the biogenesis of c-type cytochromes. Transiently binds heme delivered by CcmC and transfers the heme to apo-cytochromes in a process facilitated by CcmF and CcmH. This Wolbachia pipientis wMel protein is Cytochrome c-type biogenesis protein CcmE.